The chain runs to 356 residues: Altered inheritance of mitochondria protein 23, mitochondrial (356 aa).

The transit peptide at 1-32 (MLKVPLSDVLSQKMLFLKSFRYFHCTKYFSRD) directs the protein to the mitochondrion.

It belongs to the AIM23 family.

Its subcellular location is the mitochondrion. This is Altered inheritance of mitochondria protein 23, mitochondrial (AIM23) from Saccharomyces cerevisiae (strain ATCC 204508 / S288c) (Baker's yeast).